A 186-amino-acid chain; its full sequence is Ribosome-recycling factor (186 aa).

The protein belongs to the RRF family.

The protein localises to the cytoplasm. In terms of biological role, responsible for the release of ribosomes from messenger RNA at the termination of protein biosynthesis. May increase the efficiency of translation by recycling ribosomes from one round of translation to another. This is Ribosome-recycling factor from Leifsonia xyli subsp. xyli (strain CTCB07).